Reading from the N-terminus, the 1651-residue chain is Putative serine/threonine-protein kinase/receptor R818 (1651 aa).

Positions M1–G19 are cleaved as a signal peptide. N-linked (GlcNAc...) asparagine; by host glycosylation is found at N111, N135, N190, N236, N275, N276, N287, N452, N455, N477, N495, N540, N596, and N722. The chain crosses the membrane as a helical span at residues I749–V769. The Protein kinase 1 domain occupies L793 to I1057. ATP is bound by residues L799–V807 and K820. D915 serves as the catalytic Proton acceptor. The disordered stretch occupies residues I1089–T1115. The span at G1100–T1115 shows a compositional bias: low complexity. The Guanylate cyclase domain maps to I1135–T1278. The Protein kinase 2 domain occupies I1394–L1645. ATP contacts are provided by residues I1400 to V1408 and K1421. The active-site Proton acceptor is D1515.

The protein resides in the membrane. It catalyses the reaction L-seryl-[protein] + ATP = O-phospho-L-seryl-[protein] + ADP + H(+). The enzyme catalyses L-threonyl-[protein] + ATP = O-phospho-L-threonyl-[protein] + ADP + H(+). This chain is Putative serine/threonine-protein kinase/receptor R818, found in Acanthamoeba polyphaga mimivirus (APMV).